The primary structure comprises 229 residues: Small ribosomal subunit protein uS3 (229 aa).

One can recognise a KH type-2 domain in the interval 39–107 (VRKFLEKKLK…PAQINIAEIR (69 aa)).

This sequence belongs to the universal ribosomal protein uS3 family. In terms of assembly, part of the 30S ribosomal subunit. Forms a tight complex with proteins S10 and S14.

Binds the lower part of the 30S subunit head. Binds mRNA in the 70S ribosome, positioning it for translation. The sequence is that of Small ribosomal subunit protein uS3 from Shewanella loihica (strain ATCC BAA-1088 / PV-4).